Consider the following 266-residue polypeptide: Phosphatidylglycerol--prolipoprotein diacylglyceryl transferase (266 aa).

7 helical membrane-spanning segments follow: residues 10–30 (VAIA…LVGI), 56–76 (LVFW…VFFY), 92–112 (WEGG…TWWF), 120–140 (FFEL…AGRI), 172–192 (PSQL…LWFY), 200–220 (MAVS…VEFV), and 234–254 (WLTM…GLIA). Arginine 139 is a binding site for a 1,2-diacyl-sn-glycero-3-phospho-(1'-sn-glycerol).

It belongs to the Lgt family.

The protein resides in the cell inner membrane. It catalyses the reaction L-cysteinyl-[prolipoprotein] + a 1,2-diacyl-sn-glycero-3-phospho-(1'-sn-glycerol) = an S-1,2-diacyl-sn-glyceryl-L-cysteinyl-[prolipoprotein] + sn-glycerol 1-phosphate + H(+). Its pathway is protein modification; lipoprotein biosynthesis (diacylglyceryl transfer). In terms of biological role, catalyzes the transfer of the diacylglyceryl group from phosphatidylglycerol to the sulfhydryl group of the N-terminal cysteine of a prolipoprotein, the first step in the formation of mature lipoproteins. The polypeptide is Phosphatidylglycerol--prolipoprotein diacylglyceryl transferase (Ectopseudomonas mendocina (strain ymp) (Pseudomonas mendocina)).